The chain runs to 551 residues: Inosine-5'-monophosphate dehydrogenase (551 aa).

2 consecutive CBS domains span residues 102 to 163 (FILD…PLSE) and 165 to 221 (MTSD…PLAS). NAD(+)-binding positions include 258 to 260 (DSS) and 308 to 310 (GMG). 2 residues coordinate K(+): G310 and G312. S313 serves as a coordination point for IMP. A K(+)-binding site is contributed by C315. Residue C315 is the Thioimidate intermediate of the active site. Residues 349 to 351 (DGG), 372 to 373 (GS), and 396 to 400 (YRGMG) each bind IMP. Residues 407–462 (AGTRRTASPPARGLRSPEASPSTAASSGGASRASALSEASPSAKSEASRTSTSTGS) are disordered. Residues 422–462 (SPEASPSTAASSGGASRASALSEASPSAKSEASRTSTSTGS) show a composition bias toward low complexity. Catalysis depends on R465, which acts as the Proton acceptor. Residue Q477 participates in IMP binding. E536 and G537 together coordinate K(+).

Belongs to the IMPDH/GMPR family. Homotetramer. K(+) is required as a cofactor.

Its subcellular location is the cytoplasm. It carries out the reaction IMP + NAD(+) + H2O = XMP + NADH + H(+). It participates in purine metabolism; XMP biosynthesis via de novo pathway; XMP from IMP: step 1/1. Mycophenolic acid (MPA) is a non-competitive inhibitor that prevents formation of the closed enzyme conformation by binding to the same site as the amobile flap. In contrast, mizoribine monophosphate (MZP) is a competitive inhibitor that induces the closed conformation. MPA is a potent inhibitor of mammalian IMPDHs but a poor inhibitor of the bacterial enzymes. MZP is a more potent inhibitor of bacterial IMPDH. Potently inhibited by MPA and adenine dinucleotide analogs such as thiazole-4-carboxamide adenine dinucleotide (TAD). Its function is as follows. Catalyzes the conversion of inosine 5'-phosphate (IMP) to xanthosine 5'-phosphate (XMP), the first committed and rate-limiting step in the de novo synthesis of guanine nucleotides, and therefore plays an important role in the regulation of cell growth. In Toxoplasma gondii, this protein is Inosine-5'-monophosphate dehydrogenase.